The primary structure comprises 752 residues: Photosystem I P700 chlorophyll a apoprotein A1 (752 aa).

8 helical membrane-spanning segments follow: residues 73–96 (IFSAHFGQLAVIFLWISGMHFHGA), 159–182 (LYWIAIGGLIMSALMLFAGWFHYH), 198–222 (MNHHLAGLLGLGCLSWSGHQIHIAL), 294–312 (IAHHHLALSVLFIFAGHMY), 349–372 (WHAQLAINLAMMGSLSIIVAHHMY), 388–414 (LSLFTHHMWIGGFCVVGGAAHGAIFMV), 436–458 (AIISHLNWVCIFLGCHSFGLYIH), and 533–551 (FMVHHIHAFTIHVTVLILL). [4Fe-4S] cluster-binding residues include Cys-575 and Cys-584. The next 2 helical transmembrane spans lie at 591 to 612 (HVFLGLFWMYNSISVVIFHFSW) and 666 to 688 (SSAYGLIFLGAHFIWAFSLMFLF). His-677 serves as a coordination point for chlorophyll a'. Met-685 and Tyr-693 together coordinate chlorophyll a. Trp-694 provides a ligand contact to phylloquinone. Residues 726 to 746 (AVGLAHYLLGGIGTTWSFFLA) form a helical membrane-spanning segment.

Belongs to the PsaA/PsaB family. The PsaA/B heterodimer binds the P700 chlorophyll special pair and subsequent electron acceptors. PSI consists of a core antenna complex that captures photons, and an electron transfer chain that converts photonic excitation into a charge separation. The eukaryotic PSI reaction center is composed of at least 11 subunits. The cofactor is P700 is a chlorophyll a/chlorophyll a' dimer, A0 is one or more chlorophyll a, A1 is one or both phylloquinones and FX is a shared 4Fe-4S iron-sulfur center..

The protein resides in the plastid. It localises to the chloroplast thylakoid membrane. The enzyme catalyses reduced [plastocyanin] + hnu + oxidized [2Fe-2S]-[ferredoxin] = oxidized [plastocyanin] + reduced [2Fe-2S]-[ferredoxin]. Functionally, psaA and PsaB bind P700, the primary electron donor of photosystem I (PSI), as well as the electron acceptors A0, A1 and FX. PSI is a plastocyanin/cytochrome c6-ferredoxin oxidoreductase, converting photonic excitation into a charge separation, which transfers an electron from the donor P700 chlorophyll pair to the spectroscopically characterized acceptors A0, A1, FX, FA and FB in turn. Oxidized P700 is reduced on the lumenal side of the thylakoid membrane by plastocyanin or cytochrome c6. The polypeptide is Photosystem I P700 chlorophyll a apoprotein A1 (Trieres chinensis (Marine centric diatom)).